We begin with the raw amino-acid sequence, 377 residues long: Transcription initiation factor IIA subunit 1 (377 aa).

N-acetylalanine is present on Ala2. 3 stretches are compositionally biased toward low complexity: residues 69 to 79 (QVQQQHQPQQQ), 89 to 105 (QAQP…TQQV), and 248 to 280 (QAQI…TGDT). Disordered regions lie at residues 69-107 (QVQQ…QVLI) and 248-330 (QAQI…QELF). Residues Ser281 and Ser282 each carry the phosphoserine; by TAF1 modification. Residues 281-330 (SSEEDEDEEEDYDDDEEEDKEKDGAEDGQVEEEPLNSEDDVSDEEGQELF) are compositionally biased toward acidic residues. Ser317 and Ser322 each carry phosphoserine. 2 residues coordinate DNA: His344 and Arg345.

It belongs to the TFIIA subunit 1 family. As to quaternary structure, TFIIA is a heterodimer of the large unprocessed subunit 1 and a small subunit gamma. It was originally believed to be a heterotrimer of an alpha (p35), a beta (p19) and a gamma subunit (p12). TFIIA forms a complex with TBP. Part of TBP-based Pol II pre-initiation complex (PIC), in which Pol II core assembles with general transcription factors and other specific initiation factors including GTF2E1, GTF2E2, GTF2F1, GTF2F2, TCEA1, ERCC2, ERCC3, GTF2H2, GTF2H3, GTF2H4, GTF2H5, GTF2A1, GTF2A2, GTF2B and TBP; this large multi-subunit PIC complex mediates DNA unwinding and targets Pol II core to the transcription start site where the first phosphodiester bond forms. The alpha and beta subunits are postranslationally produced from the precursor formby TASP1. The cleavage promotes proteasomal degradation.

The protein resides in the nucleus. In terms of biological role, TFIIA is a component of the transcription machinery of RNA polymerase II and plays an important role in transcriptional activation. TFIIA in a complex with TBP mediates transcriptional activity. The sequence is that of Transcription initiation factor IIA subunit 1 (Gtf2a1) from Rattus norvegicus (Rat).